Consider the following 433-residue polypeptide: Inositol hexakisphosphate kinase 1 (433 aa).

The tract at residues 100–160 (ETVEQDDTPE…SPKVELHSHS (61 aa)) is disordered. Residues 113-123 (PRRKHSRRSLH) are compositionally biased toward basic residues. Over residues 139–149 (SFETSESSQEA) the composition is skewed to polar residues. The segment covering 150-160 (KSPKVELHSHS) has biased composition (basic and acidic residues). Residue Ser-151 is modified to Phosphoserine. Substrate is bound at residue 220-228 (PCVLDLKMG). The interval 359–383 (EVPPPCGPSTSPSSTSLEAGPSSPP) is disordered.

It belongs to the inositol phosphokinase (IPK) family. In terms of tissue distribution, highly expressed in brain and testis. Detected at much lower levels in heart, kidney, liver, lung and spleen.

It localises to the cytoplasm. It is found in the nucleus. The enzyme catalyses 1D-myo-inositol hexakisphosphate + ATP = 5-diphospho-1D-myo-inositol 1,2,3,4,6-pentakisphosphate + ADP. It catalyses the reaction 1-diphospho-1D-myo-inositol 2,3,4,5,6-pentakisphosphate + ATP + H(+) = 1,5-bis(diphospho)-1D-myo-inositol 2,3,4,6-tetrakisphosphate + ADP. In terms of biological role, converts inositol hexakisphosphate (InsP6) to diphosphoinositol pentakisphosphate (InsP7/PP-InsP5). Converts 1,3,4,5,6-pentakisphosphate (InsP5) to PP-InsP4. The chain is Inositol hexakisphosphate kinase 1 (Ip6k1) from Mus musculus (Mouse).